Reading from the N-terminus, the 162-residue chain is Mediator of RNA polymerase II transcription subunit 31 (162 aa).

Positions 131 to 162 (VQGGQNVEAGDTGHNEGDQGTQQDKENIALKT) are disordered. The span at 141 to 162 (DTGHNEGDQGTQQDKENIALKT) shows a compositional bias: basic and acidic residues.

This sequence belongs to the Mediator complex subunit 31 family. In terms of assembly, component of the Mediator complex.

Its subcellular location is the nucleus. Functionally, component of the Mediator complex, a coactivator involved in the regulated transcription of nearly all RNA polymerase II-dependent genes. Mediator functions as a bridge to convey information from gene-specific regulatory proteins to the basal RNA polymerase II transcription machinery. Mediator is recruited to promoters by direct interactions with regulatory proteins and serves as a scaffold for the assembly of a functional preinitiation complex with RNA polymerase II and the general transcription factors. The sequence is that of Mediator of RNA polymerase II transcription subunit 31 (soh1) from Aspergillus fumigatus (strain ATCC MYA-4609 / CBS 101355 / FGSC A1100 / Af293) (Neosartorya fumigata).